Consider the following 735-residue polypeptide: Ribosomal RNA large subunit methyltransferase K/L (735 aa).

The 112-residue stretch at 45–156 folds into the THUMP domain; the sequence is DGYRACLWSR…RDSLSFSLDL (112 aa).

Belongs to the methyltransferase superfamily. RlmKL family.

The protein resides in the cytoplasm. The enzyme catalyses guanosine(2445) in 23S rRNA + S-adenosyl-L-methionine = N(2)-methylguanosine(2445) in 23S rRNA + S-adenosyl-L-homocysteine + H(+). The catalysed reaction is guanosine(2069) in 23S rRNA + S-adenosyl-L-methionine = N(2)-methylguanosine(2069) in 23S rRNA + S-adenosyl-L-homocysteine + H(+). In terms of biological role, specifically methylates the guanine in position 2445 (m2G2445) and the guanine in position 2069 (m7G2069) of 23S rRNA. The sequence is that of Ribosomal RNA large subunit methyltransferase K/L from Allochromatium vinosum (strain ATCC 17899 / DSM 180 / NBRC 103801 / NCIMB 10441 / D) (Chromatium vinosum).